A 1101-amino-acid polypeptide reads, in one-letter code: Nuclear pore complex protein NUP107 (1101 aa).

It belongs to the nucleoporin Nup84/Nup107 family. Part of the nuclear pore complex (NPC). The NPC has an eight-fold symmetrical structure comprising a central transport channel and two rings, the cytoplasmic and nuclear rings, to which eight filaments are attached. The cytoplasmic filaments have loose ends, while the nuclear filaments are joined in a distal ring, forming a nuclear basket. NPCs are highly dynamic in configuration and composition, and can be devided in 3 subcomplexes, the NUP62 subcomplex, the NUP107-160 subcomplex and the NUP93 subcomplex, containing approximately 30 different nucleoporin proteins.

The protein localises to the nucleus envelope. Its subcellular location is the nucleus. It localises to the nuclear pore complex. The chain is Nuclear pore complex protein NUP107 from Arabidopsis thaliana (Mouse-ear cress).